A 489-amino-acid chain; its full sequence is Glycogen synthase (489 aa).

Position 18 (lysine 18) interacts with ADP-alpha-D-glucose.

The protein belongs to the glycosyltransferase 1 family. Bacterial/plant glycogen synthase subfamily.

It catalyses the reaction [(1-&gt;4)-alpha-D-glucosyl](n) + ADP-alpha-D-glucose = [(1-&gt;4)-alpha-D-glucosyl](n+1) + ADP + H(+). It functions in the pathway glycan biosynthesis; glycogen biosynthesis. Functionally, synthesizes alpha-1,4-glucan chains using ADP-glucose. The chain is Glycogen synthase from Rhodopseudomonas palustris (strain BisA53).